The chain runs to 95 residues: Enhancer of yellow 2 transcription factor (95 aa).

The protein belongs to the ENY2 family. In terms of assembly, component of the nuclear pore complex (NPC)-associated AMEX complex (anchoring and mRNA export complex), composed of at least e(y)2 and xmas-2. Component of the SAGA transcription coactivator-HAT complexes, at least composed of Ada2b, e(y)2, Pcaf/Gcn5, Taf10 and Nipped-A/Trrap. Within the SAGA complex, e(y)2, Sgf11, and not/nonstop form an additional subcomplex of SAGA called the DUB module (deubiquitination module). Component of the THO complex, composed of at least e(y)2, HPR1, THO2, THOC5, THOC6 and THOC7. Interacts with e(y)1. Interacts with su(Hw) (via zinc fingers). Interacts with xmas-2; required for localization to the nuclear periphery. Interacts with the nuclear pore complex (NPC).

The protein localises to the nucleus. It is found in the nucleoplasm. The protein resides in the cytoplasm. Involved in mRNA export coupled transcription activation by association with both the AMEX and the SAGA complexes. The SAGA complex is a multiprotein complex that activates transcription by remodeling chromatin and mediating histone acetylation and deubiquitination. Within the SAGA complex, participates in a subcomplex that specifically deubiquitinates histone H2B. The SAGA complex is recruited to specific gene promoters by activators, where it is required for transcription. Required for nuclear receptor-mediated transactivation. Involved in transcription elongation by recruiting the THO complex onto nascent mRNA. The AMEX complex functions in docking export-competent ribonucleoprotein particles (mRNPs) to the nuclear entrance of the nuclear pore complex (nuclear basket). AMEX participates in mRNA export and accurate chromatin positioning in the nucleus by tethering genes to the nuclear periphery. The protein is Enhancer of yellow 2 transcription factor of Drosophila virilis (Fruit fly).